The chain runs to 145 residues: D-aminoacyl-tRNA deacylase (145 aa).

A Gly-cisPro motif, important for rejection of L-amino acids motif is present at residues 137 to 138 (GP).

This sequence belongs to the DTD family. Homodimer.

It localises to the cytoplasm. It carries out the reaction glycyl-tRNA(Ala) + H2O = tRNA(Ala) + glycine + H(+). The enzyme catalyses a D-aminoacyl-tRNA + H2O = a tRNA + a D-alpha-amino acid + H(+). In terms of biological role, an aminoacyl-tRNA editing enzyme that deacylates mischarged D-aminoacyl-tRNAs. Also deacylates mischarged glycyl-tRNA(Ala), protecting cells against glycine mischarging by AlaRS. Acts via tRNA-based rather than protein-based catalysis; rejects L-amino acids rather than detecting D-amino acids in the active site. By recycling D-aminoacyl-tRNA to D-amino acids and free tRNA molecules, this enzyme counteracts the toxicity associated with the formation of D-aminoacyl-tRNA entities in vivo and helps enforce protein L-homochirality. This Brevibacillus brevis (strain 47 / JCM 6285 / NBRC 100599) protein is D-aminoacyl-tRNA deacylase.